The primary structure comprises 1871 residues: Girdin (1871 aa).

A Calponin-homology (CH) domain is found at Gln-12–Ala-132. A coiled-coil region spans residues His-196–Glu-425. 3 positions are modified to phosphoserine: Ser-233, Ser-237, and Ser-449. Residues Thr-458–Asp-1385 adopt a coiled-coil conformation. 2 disordered regions span residues Glu-816–Arg-842 and Arg-1010–Gln-1035. Ser-1020 is subject to Phosphoserine. A compositionally biased stretch (basic and acidic residues) spans Glu-1026–Gln-1035. A Phosphoserine modification is found at Ser-1387. The tract at residues Arg-1390–Lys-1408 is phosphoinositide-binding. The segment covering Lys-1407–Lys-1416 has biased composition (basic and acidic residues). Disordered stretches follow at residues Lys-1407 to Lys-1459 and Thr-1559 to Asn-1601. The residue at position 1417 (Ser-1417) is a Phosphoserine; by PKB/AKT1. Composition is skewed to polar residues over residues Ser-1417–Gly-1430, Val-1445–Lys-1459, and Thr-1559–Ser-1578. Thr-1421 bears the Phosphothreonine mark. A GBA motif is present at residues Lys-1672 to Ser-1702. Thr-1673 is modified (phosphothreonine). Position 1675 is a phosphoserine (Ser-1675). The residue at position 1690 (Ser-1690) is a Phosphoserine; by PKC/PRKCQ. An SH2-like; required for interaction with growth factor receptors region spans residues Ser-1713–Asp-1823. Residue Ser-1717 is modified to Phosphoserine. Positions Ser-1736–Ser-1871 are disordered. A compositionally biased stretch (basic and acidic residues) spans Phe-1743–Asp-1763. Residues Tyr-1765 and Tyr-1799 each carry the phosphotyrosine modification. Polar residues-rich tracts occupy residues Ser-1787 to Tyr-1799 and Ser-1807 to Arg-1818. Phosphoserine occurs at positions 1820 and 1837. The span at Ser-1820–Arg-1830 shows a compositional bias: basic and acidic residues. Positions Pro-1838–Asn-1851 are enriched in low complexity. Basic and acidic residues predominate over residues Lys-1854–Ser-1871.

It belongs to the CCDC88 family. In terms of assembly, homodimer. Interacts (via GBA motif) with guanine nucleotide-binding protein G(i) alpha subunits GNAI1, GNAI2 and GNAI3. Also interacts (via GNA motif) with guanine nucleotide-binding protein G(s) alpha subunit GNAS. Interaction with G(i) alpha subunits occurs before interaction with GNAS and is regulated by phosphorylation; phosphorylation at Ser-1675 enhances binding to G(i) alpha subunits while phosphorylation at Ser-1690 abolishes G(i) alpha subunit binding, promoting binding to GNAS. Interacts (via C-terminal SH2-like region) with growth factor receptors EGFR, INSR and KDR/VEGFR2 (via their autophosphorylated cytoplasmic tails). Forms a complex with EGFR and GNAI3 which leads to enhanced EGFR signaling and triggering of cell migration; ligand stimulation is required for recruitment of GNAI3 to the complex. Interacts (tyrosine-phosphorylated form) with phosphatidylinositol 3-kinase (PI3K) regulatory subunit PIK3R1/p85a (via SH2 domains); the interaction enables recruitment of PIK3R1 to the EGFR receptor, enhancing PI3K activity and cell migration. Interacts with serine/threonine-protein kinase PRKCQ; the interaction leads to phosphorylation of CCDC88A and inhibition of its guanine nucleotide exchange factor activity. Interacts (via C-terminus) with DISC1; the interaction is direct. Interacts with AKT proteins; the interaction is inhibited in the presence of DISC1. Interacts with AKT1/PKB (via C-terminus). The non-phosphorylated form interacts with phosphatidylinositol 4-phosphate [PI(4)P] and weakly with phosphatidylinositol 3-phosphate [PI(3)P]. Interacts with microtubules. Interacts with actin. In terms of processing, phosphorylation is induced by epidermal growth factor (EGF) in a phosphoinositide 3-kinase (PI3K)-dependent manner. Phosphorylation by AKT1/PKB is necessary for delocalization from the cell membrane and for cell migration. Phosphorylated on tyrosine residues which promotes binding to phosphatidylinositol 3-kinase (PI3K) regulatory subunit PIK3R1/p85a and enhances PI3K activity. Tyrosine-phosphorylated by both receptor and non-receptor tyrosine kinases in vitro. Tyrosine phosphorylation is required for AKT1-dependent phosphorylation of Ser-1417. Phosphorylation at Ser-1690 by PRKCQ disrupts interaction with GNAI3 and inhibits guanine nucleotide exchange factor activity. Expressed ubiquitously.

The protein resides in the cell membrane. It localises to the cytoplasm. Its subcellular location is the cytosol. It is found in the cytoplasmic vesicle. The protein localises to the cell projection. The protein resides in the lamellipodium. It localises to the cytoskeleton. Its subcellular location is the cilium basal body. It is found in the microtubule organizing center. The protein localises to the centrosome. The protein resides in the centriole. In terms of biological role, bifunctional modulator of guanine nucleotide-binding proteins (G proteins). Acts as a non-receptor guanine nucleotide exchange factor which binds to and activates guanine nucleotide-binding protein G(i) alpha subunits. Also acts as a guanine nucleotide dissociation inhibitor for guanine nucleotide-binding protein G(s) subunit alpha GNAS. Essential for cell migration. Interacts in complex with G(i) alpha subunits with the EGFR receptor, retaining EGFR at the cell membrane following ligand stimulation and promoting EGFR signaling which triggers cell migration. Binding to Gi-alpha subunits displaces the beta and gamma subunits from the heterotrimeric G-protein complex which enhances phosphoinositide 3-kinase (PI3K)-dependent phosphorylation and kinase activity of AKT1/PKB. Phosphorylation of AKT1/PKB induces the phosphorylation of downstream effectors GSK3 and FOXO1/FKHR, and regulates DNA replication and cell proliferation. Binds in its tyrosine-phosphorylated form to the phosphatidylinositol 3-kinase (PI3K) regulatory subunit PIK3R1 which enables recruitment of PIK3R1 to the EGFR receptor, enhancing PI3K activity and cell migration. Plays a role as a key modulator of the AKT-mTOR signaling pathway, controlling the tempo of the process of newborn neuron integration during adult neurogenesis, including correct neuron positioning, dendritic development and synapse formation. Inhibition of G(s) subunit alpha GNAS leads to reduced cellular levels of cAMP and suppression of cell proliferation. Essential for the integrity of the actin cytoskeleton. Required for formation of actin stress fibers and lamellipodia. May be involved in membrane sorting in the early endosome. Plays a role in ciliogenesis and cilium morphology and positioning and this may partly be through regulation of the localization of scaffolding protein CROCC/Rootletin. This Homo sapiens (Human) protein is Girdin (CCDC88A).